The following is a 111-amino-acid chain: Probable U2 small nuclear ribonucleoprotein B'' (111 aa).

The region spanning 4-83 (NTLYVNNLND…KEMKIQYAHS (80 aa)) is the RRM domain.

In terms of assembly, belongs to the 40S cdc5-associated complex (or cwf complex), a spliceosome sub-complex reminiscent of a late-stage spliceosome composed of the U2, U5 and U6 snRNAs and at least brr2, cdc5, cwf2/prp3, cwf3/syf1, cwf4/syf3, cwf5/ecm2, spp42/cwf6, cwf7/spf27, cwf8, cwf9, cwf10, cwf11, cwf12, prp45/cwf13, cwf14, cwf15, cwf16, cwf17, cwf18, cwf19, cwf20, cwf21, cwf22, cwf23, cwf24, cwf25, cwf26, cyp7/cwf27, cwf28, cwf29/ist3, lea1, msl1, prp5/cwf1, prp10, prp12/sap130, prp17, prp22, sap61, sap62, sap114, sap145, slu7, smb1, smd1, smd3, smf1, smg1 and syf2.

Its subcellular location is the nucleus. In terms of biological role, involved in pre-mRNA splicing. This protein is associated with snRNP U2. It binds stem loop IV of U2 snRNA. This chain is Probable U2 small nuclear ribonucleoprotein B'' (msl1), found in Schizosaccharomyces pombe (strain 972 / ATCC 24843) (Fission yeast).